Here is a 540-residue protein sequence, read N- to C-terminus: Testis-specific chromodomain protein Y 1 (540 aa).

The 61-residue stretch at 6–66 (FEVEAIVDKR…RQTEKQKKLT (61 aa)) folds into the Chromo domain. The segment at 76-106 (NNARRRTSRSTKANYSKNSPKTPVTDKHHRS) is disordered. Positions 87 to 97 (KANYSKNSPKT) are enriched in polar residues.

Interacts (via chromo domain) with histone H3K9me3. Testis-specific. Detected in spermatids (at protein level).

Its subcellular location is the nucleus. It carries out the reaction L-lysyl-[protein] + acetyl-CoA = N(6)-acetyl-L-lysyl-[protein] + CoA + H(+). Has histone acetyltransferase activity, with a preference for histone H4. In Homo sapiens (Human), this protein is Testis-specific chromodomain protein Y 1 (CDY1).